Reading from the N-terminus, the 556-residue chain is Arginine--tRNA ligase 1 (556 aa).

Residues Ala-132–His-142 carry the 'HIGH' region motif.

The protein belongs to the class-I aminoacyl-tRNA synthetase family. Monomer.

Its subcellular location is the cytoplasm. The enzyme catalyses tRNA(Arg) + L-arginine + ATP = L-arginyl-tRNA(Arg) + AMP + diphosphate. The chain is Arginine--tRNA ligase 1 from Bacillus anthracis.